The sequence spans 453 residues: Bifunctional protein GlmU (453 aa).

The tract at residues 1–226 (MAFSVVILAA…EIEVEGINNR (226 aa)) is pyrophosphorylase. Residues 8–11 (LAAG), Lys-22, Gln-73, and 78–79 (GT) contribute to the UDP-N-acetyl-alpha-D-glucosamine site. Residue Asp-102 coordinates Mg(2+). UDP-N-acetyl-alpha-D-glucosamine is bound by residues Gly-137, Glu-151, Asn-166, and Asn-224. Asn-224 lines the Mg(2+) pocket. The linker stretch occupies residues 227–247 (KQLAAIERAFQFEQAQELMMQ). The N-acetyltransferase stretch occupies residues 248–453 (GVSLLDPHRF…SGWQRPTKPE (206 aa)). Arg-330 and Lys-348 together coordinate UDP-N-acetyl-alpha-D-glucosamine. Catalysis depends on His-360, which acts as the Proton acceptor. 2 residues coordinate UDP-N-acetyl-alpha-D-glucosamine: Tyr-363 and Asn-374. Acetyl-CoA is bound by residues Ala-377, 383-384 (NY), Ser-402, Ala-420, and Arg-437.

It in the N-terminal section; belongs to the N-acetylglucosamine-1-phosphate uridyltransferase family. This sequence in the C-terminal section; belongs to the transferase hexapeptide repeat family. In terms of assembly, homotrimer. Mg(2+) serves as cofactor.

It localises to the cytoplasm. It carries out the reaction alpha-D-glucosamine 1-phosphate + acetyl-CoA = N-acetyl-alpha-D-glucosamine 1-phosphate + CoA + H(+). It catalyses the reaction N-acetyl-alpha-D-glucosamine 1-phosphate + UTP + H(+) = UDP-N-acetyl-alpha-D-glucosamine + diphosphate. The protein operates within nucleotide-sugar biosynthesis; UDP-N-acetyl-alpha-D-glucosamine biosynthesis; N-acetyl-alpha-D-glucosamine 1-phosphate from alpha-D-glucosamine 6-phosphate (route II): step 2/2. It functions in the pathway nucleotide-sugar biosynthesis; UDP-N-acetyl-alpha-D-glucosamine biosynthesis; UDP-N-acetyl-alpha-D-glucosamine from N-acetyl-alpha-D-glucosamine 1-phosphate: step 1/1. It participates in bacterial outer membrane biogenesis; LPS lipid A biosynthesis. Its function is as follows. Catalyzes the last two sequential reactions in the de novo biosynthetic pathway for UDP-N-acetylglucosamine (UDP-GlcNAc). The C-terminal domain catalyzes the transfer of acetyl group from acetyl coenzyme A to glucosamine-1-phosphate (GlcN-1-P) to produce N-acetylglucosamine-1-phosphate (GlcNAc-1-P), which is converted into UDP-GlcNAc by the transfer of uridine 5-monophosphate (from uridine 5-triphosphate), a reaction catalyzed by the N-terminal domain. In Pseudoalteromonas atlantica (strain T6c / ATCC BAA-1087), this protein is Bifunctional protein GlmU.